The sequence spans 164 residues: Succinate dehydrogenase assembly factor 2, mitochondrial (164 aa).

Residues 1–27 (MAVVTLIPTLARVLSKHSLLSPLLSVT) constitute a mitochondrion transit peptide.

It belongs to the SDHAF2 family. Interacts with SDHA within the SDH catalytic dimer.

The protein localises to the mitochondrion matrix. Its function is as follows. Plays an essential role in the assembly of succinate dehydrogenase (SDH), an enzyme complex (also referred to as respiratory complex II) that is a component of both the tricarboxylic acid (TCA) cycle and the mitochondrial electron transport chain, and which couples the oxidation of succinate to fumarate with the reduction of ubiquinone (coenzyme Q) to ubiquinol. Required for flavinylation (covalent attachment of FAD) of the flavoprotein subunit SDHA of the SDH catalytic dimer. In Rattus norvegicus (Rat), this protein is Succinate dehydrogenase assembly factor 2, mitochondrial.